The sequence spans 363 residues: Spermatogenesis-associated protein 22 (363 aa).

Polar residues-rich tracts occupy residues 1–12 (MKRSLNENSARS), 30–48 (QPLT…TPSD), 98–108 (IQSNTGRSQGG), and 140–157 (NDGK…QQKQ). Disordered stretches follow at residues 1-51 (MKRS…DNYD), 98-127 (IQSN…NKND), and 140-170 (NDGK…SRNK).

Component of a multiprotein complex with MEIOB and RPA2. Interacts with MEIOB. Interacts with the complex BRME1:HSF2BP:BRCA2. As to expression, highly expressed in adult testis.

Its subcellular location is the chromosome. Functionally, meiosis-specific protein required for homologous recombination in meiosis I. The sequence is that of Spermatogenesis-associated protein 22 from Homo sapiens (Human).